We begin with the raw amino-acid sequence, 615 residues long: Peptidoglycan-binding protein YepA (615 aa).

The signal sequence occupies residues Met1–Ala26.

It belongs to the bacterial solute-binding protein 5 family. In terms of assembly, the complex is composed of one ATP-binding protein (YejF), two transmembrane proteins (YejB and YejE) and a solute-binding protein (YepA).

The protein localises to the periplasm. Functionally, part of the ABC transporter complex YejBEF-YepA involved in the uptake of muropeptides, the breakdown products of cell wall peptidoglycan. The import of muropeptides into the cell enables peptidoglycan recycling, which is vital for cell wall integrity in this bacterium. Probably binds muropeptides. The sequence is that of Peptidoglycan-binding protein YepA from Agrobacterium fabrum (strain C58 / ATCC 33970) (Agrobacterium tumefaciens (strain C58)).